Reading from the N-terminus, the 345-residue chain is S-adenosylmethionine:tRNA ribosyltransferase-isomerase (345 aa).

This sequence belongs to the QueA family. In terms of assembly, monomer.

The protein localises to the cytoplasm. The catalysed reaction is 7-aminomethyl-7-carbaguanosine(34) in tRNA + S-adenosyl-L-methionine = epoxyqueuosine(34) in tRNA + adenine + L-methionine + 2 H(+). Its pathway is tRNA modification; tRNA-queuosine biosynthesis. Its function is as follows. Transfers and isomerizes the ribose moiety from AdoMet to the 7-aminomethyl group of 7-deazaguanine (preQ1-tRNA) to give epoxyqueuosine (oQ-tRNA). The chain is S-adenosylmethionine:tRNA ribosyltransferase-isomerase from Shewanella woodyi (strain ATCC 51908 / MS32).